The sequence spans 388 residues: uncharacterized protein (388 aa).

It belongs to the glycosyltransferase 28 family.

This is an uncharacterized protein from Methanosarcina acetivorans (strain ATCC 35395 / DSM 2834 / JCM 12185 / C2A).